The sequence spans 462 residues: Metal cation symporter ZIP8 (462 aa).

Residues Met1–Gly19 form the signal peptide. The Extracellular segment spans residues His20–Gly132. Residues Asn40, Asn88, and Asn96 are each glycosylated (N-linked (GlcNAc...) asparagine). Residues Phe133 to Ile153 traverse the membrane as a helical segment. Topologically, residues Lys154–Lys160 are cytoplasmic. The chain crosses the membrane as a helical span at residues Ile161 to Leu181. Residues Ile182 to Lys191 are Extracellular-facing. A helical membrane pass occupies residues Ile192 to Val212. Topologically, residues Glu213–Ala367 are cytoplasmic. The XEXPHE-motif signature appears at Glu345–Glu350. Residues Leu368 to Val388 traverse the membrane as a helical segment. At Gly389–Asn390 the chain is on the extracellular side. The chain crosses the membrane as a helical span at residues Asn391–Ala411. At Asp412–Asp431 the chain is on the cytoplasmic side. The helical transmembrane segment at Phe432 to Ile452 threads the bilayer. The Extracellular segment spans residues Thr453–Gln462.

Belongs to the ZIP transporter (TC 2.A.5) family. Homodimer. N-glycosylated. N-glycosylation is not required for proper iron and zinc transport. Ubiquitously expressed.

It is found in the cell membrane. Its subcellular location is the apical cell membrane. The protein resides in the basolateral cell membrane. It localises to the lysosome membrane. It catalyses the reaction Zn(2+)(out) + 2 hydrogencarbonate(out) = Zn(2+)(in) + 2 hydrogencarbonate(in). It carries out the reaction selenite(out) + Zn(2+)(out) + hydrogencarbonate(out) = selenite(in) + Zn(2+)(in) + hydrogencarbonate(in). The catalysed reaction is Mn(2+)(out) + 2 hydrogencarbonate(out) = Mn(2+)(in) + 2 hydrogencarbonate(in). The enzyme catalyses Cd(2+)(out) + 2 hydrogencarbonate(out) = Cd(2+)(in) + 2 hydrogencarbonate(in). It catalyses the reaction Fe(2+)(out) + 2 hydrogencarbonate(out) = Fe(2+)(in) + 2 hydrogencarbonate(in). It carries out the reaction Co(2+)(out) + 2 hydrogencarbonate(out) = Co(2+)(in) + 2 hydrogencarbonate(in). Its function is as follows. Electroneutral divalent metal cation:bicarbonate symporter of the plasma membrane mediating the cellular uptake of zinc and manganese, two divalent metal cations important for development, tissue homeostasis and immunity. Transports an electroneutral complex composed of a divalent metal cation and two bicarbonate anions or alternatively a bicarbonate and a selenite anion. Thereby, it also contributes to the cellular uptake of selenium, an essential trace metal and micronutrient. Also imports cadmium a non-essential metal which is cytotoxic and carcinogenic. May also transport iron and cobalt through membranes. Through zinc import, indirectly regulates the metal-dependent transcription factor MTF1 and the expression of some metalloproteases involved in cartilage catabolism and also probably heart development. Also indirectly regulates the expression of proteins involved in cell morphology and cytoskeleton organization. Indirectly controls innate immune function and inflammatory response by regulating zinc cellular uptake which in turn modulates the expression of genes specific of these processes. Protects, for instance, cells from injury and death at the onset of inflammation. By regulating zinc influx into monocytes also directly modulates their adhesion to endothelial cells and arteries. Reclaims manganese from the bile at the apical membrane of hepatocytes, thereby regulating the activity of the manganese-dependent enzymes through the systemic levels of the nutrient. Also participates in manganese reabsorption in the proximal tubule of the kidney. By mediating the extracellular uptake of manganese by cells of the blood-brain barrier, may also play a role in the transport of the micronutrient to the brain. With manganese cellular uptake also participates in mitochondrial proper function. Finally, also probably functions intracellularly, translocating zinc from lysosome to cytosol to indirectly enhance the expression of specific genes during TCR-mediated T cell activation. The polypeptide is Metal cation symporter ZIP8 (Mus musculus (Mouse)).